A 232-amino-acid chain; its full sequence is MKVEEREYIKKYWVGLMDGVGSIEVNHYRMKNLQYRLVLNVNDSSENMAMLLKIQQVIGGYLIKRKEKALIAWTINNKMQIEDVIKIFEDYNLVTVRKRNQLQFLKENLKRNDVNWYLSERKNKYKKSLIVSNIEEISYFNEWFSGFVEATGSFCIRAQKEKYFRIAHRYDMPLLLNLIIKFNITTKLREQKNEQYAIEIYKKTLLEVLITHFEKYPLLGDKKNSLETFKTR.

The protein belongs to the LAGLIDADG endonuclease family.

The protein resides in the mitochondrion. In terms of biological role, mitochondrial DNA endonuclease involved in intron homing. This chain is Probable intron-encoded endonuclease aI3 (aI3), found in Dictyostelium discoideum (Social amoeba).